An 88-amino-acid polypeptide reads, in one-letter code: Small ribosomal subunit protein uS15 (88 aa).

It belongs to the universal ribosomal protein uS15 family. In terms of assembly, part of the 30S ribosomal subunit. Forms a bridge to the 50S subunit in the 70S ribosome, contacting the 23S rRNA.

In terms of biological role, one of the primary rRNA binding proteins, it binds directly to 16S rRNA where it helps nucleate assembly of the platform of the 30S subunit by binding and bridging several RNA helices of the 16S rRNA. Forms an intersubunit bridge (bridge B4) with the 23S rRNA of the 50S subunit in the ribosome. In Halothermothrix orenii (strain H 168 / OCM 544 / DSM 9562), this protein is Small ribosomal subunit protein uS15.